Here is a 715-residue protein sequence, read N- to C-terminus: Polyribonucleotide nucleotidyltransferase (715 aa).

Mg(2+) contacts are provided by Asp-485 and Asp-491. Residues Pro-552 to Ile-611 form the KH domain. Residues Asn-621–Lys-689 form the S1 motif domain. Residues Thr-695–Ile-715 form a disordered region.

This sequence belongs to the polyribonucleotide nucleotidyltransferase family. Component of the RNA degradosome, which is a multiprotein complex involved in RNA processing and mRNA degradation. It depends on Mg(2+) as a cofactor.

The protein localises to the cytoplasm. It carries out the reaction RNA(n+1) + phosphate = RNA(n) + a ribonucleoside 5'-diphosphate. Functionally, involved in mRNA degradation. Catalyzes the phosphorolysis of single-stranded polyribonucleotides processively in the 3'- to 5'-direction. The polypeptide is Polyribonucleotide nucleotidyltransferase (Actinobacillus pleuropneumoniae serotype 3 (strain JL03)).